The sequence spans 234 residues: Large ribosomal subunit protein uL1 (234 aa).

It belongs to the universal ribosomal protein uL1 family. In terms of assembly, part of the 50S ribosomal subunit.

Binds directly to 23S rRNA. The L1 stalk is quite mobile in the ribosome, and is involved in E site tRNA release. Functionally, protein L1 is also a translational repressor protein, it controls the translation of the L11 operon by binding to its mRNA. In Bartonella tribocorum (strain CIP 105476 / IBS 506), this protein is Large ribosomal subunit protein uL1.